Reading from the N-terminus, the 358-residue chain is 3-isopropylmalate dehydrogenase 2 (358 aa).

74–87 (GPKWDKLPAESRPE) lines the NAD(+) pocket. Substrate-binding residues include Arg-94, Arg-104, Arg-132, and Asp-221. Mg(2+)-binding residues include Asp-221, Asp-245, and Asp-249. 279–291 (GSAPDIAGQGVAN) serves as a coordination point for NAD(+).

Belongs to the isocitrate and isopropylmalate dehydrogenases family. LeuB type 1 subfamily. In terms of assembly, homodimer. Requires Mg(2+) as cofactor. Mn(2+) is required as a cofactor.

It is found in the cytoplasm. It carries out the reaction (2R,3S)-3-isopropylmalate + NAD(+) = 4-methyl-2-oxopentanoate + CO2 + NADH. Its pathway is amino-acid biosynthesis; L-leucine biosynthesis; L-leucine from 3-methyl-2-oxobutanoate: step 3/4. Functionally, catalyzes the oxidation of 3-carboxy-2-hydroxy-4-methylpentanoate (3-isopropylmalate) to 3-carboxy-4-methyl-2-oxopentanoate. The product decarboxylates to 4-methyl-2 oxopentanoate. The sequence is that of 3-isopropylmalate dehydrogenase 2 from Dechloromonas aromatica (strain RCB).